The sequence spans 361 residues: POU domain, class 3, transcription factor 4 (361 aa).

Disordered stretches follow at residues 99–131 (PHVA…GQPL) and 144–192 (MLEH…PTSD). Residues 122–131 (PSITSSGQPL) show a composition bias toward polar residues. The segment covering 165 to 183 (VLREPPDHGELGSHHCQDH) has biased composition (basic and acidic residues). The 75-residue stretch at 186-260 (EETPTSDELE…LLNKWLEEAD (75 aa)) folds into the POU-specific domain. At Ser-265 the chain carries Phosphoserine. The homeobox DNA-binding region spans 278 to 337 (KRKKRTSIEVSVKGVLETHFLKCPKPAAQEISSLADSLQLEKEVVRVWFCNRRQKEKRMT).

This sequence belongs to the POU transcription factor family. Class-3 subfamily. In terms of assembly, interacts with HNRNPU. In terms of tissue distribution, brain specific.

The protein resides in the nucleus. Its function is as follows. Probable transcription factor which exert its primary action widely during early neural development and in a very limited set of neurons in the mature brain. In Homo sapiens (Human), this protein is POU domain, class 3, transcription factor 4 (POU3F4).